The primary structure comprises 49 residues: uncharacterized protein (49 aa).

Residues 22–42 (AIVGISIMIIIAIGIYLIIEY) form a helical membrane-spanning segment.

The protein localises to the membrane. This is an uncharacterized protein from Methanocaldococcus jannaschii (strain ATCC 43067 / DSM 2661 / JAL-1 / JCM 10045 / NBRC 100440) (Methanococcus jannaschii).